A 686-amino-acid chain; its full sequence is Chromatin modification-related protein EAF1 (686 aa).

Positions 71 to 97 (QMKRRQNDHHNQGPPPKVQKSTVDSLK) are disordered. Residues 202–280 (FKFIRKSKKK…DKSIIRNLPV (79 aa)) enclose the HSA domain. The 65-residue stretch at 354–418 (IPTIWLPEDD…FERYIQLNDK (65 aa)) folds into the Myb-like domain. 3 disordered regions span residues 493–517 (RKSTAELQANQNVTEPKPNSDRIPT), 544–617 (ARMV…QQRR), and 657–686 (QQGYGVPSSPVPPHQKNQTASPMSGSPNNA). The segment covering 497–506 (AELQANQNVT) has biased composition (polar residues). Over residues 554–568 (APAPAPAPPPPPPPK) the composition is skewed to pro residues. Over residues 574–588 (TTPNGTPLTNEQIQH) the composition is skewed to polar residues. The segment covering 599 to 613 (LQQQQQQQQQQQHQQ) has biased composition (low complexity). The span at 671–686 (QKNQTASPMSGSPNNA) shows a compositional bias: polar residues.

Belongs to the EAF1 family. As to quaternary structure, component of the NuA4 histone acetyltransferase complex.

It localises to the nucleus. Functionally, component of the NuA4 histone acetyltransferase complex which is involved in transcriptional activation of selected genes principally by acetylation of nucleosomal histone H4 and H2A. The NuA4 complex is also involved in DNA repair. In Candida albicans (strain SC5314 / ATCC MYA-2876) (Yeast), this protein is Chromatin modification-related protein EAF1 (VID21).